A 958-amino-acid chain; its full sequence is Transportin MOS14 (958 aa).

The Importin N-terminal domain occupies 26–93 (ADRWLQNFQG…RQSLTTLLKK (68 aa)).

It belongs to the importin beta family. As to quaternary structure, interacts with RS2Z33, RSZ21, RS31A, SR34 and RAN1.

Its subcellular location is the nucleus. In terms of biological role, functions as a nuclear import receptor for serine-arginine rich (SR) proteins. Regulates nuclear import of SR proteins that are required for proper splicing of the two resistance (R) genes SNC1 and RPS4, a crucial step for their functions in plant immunity. In Arabidopsis thaliana (Mouse-ear cress), this protein is Transportin MOS14.